Here is an 89-residue protein sequence, read N- to C-terminus: UPF0237 protein CPE1496 (89 aa).

An ACT domain is found at Val-4 to Asn-84.

Belongs to the UPF0237 family.

The chain is UPF0237 protein CPE1496 from Clostridium perfringens (strain 13 / Type A).